We begin with the raw amino-acid sequence, 422 residues long: Glutamyl-tRNA reductase (422 aa).

Residues 49–52 (TCNR), serine 107, 112–114 (EPQ), and glutamine 118 each bind substrate. The Nucleophile role is filled by cysteine 50. An NADP(+)-binding site is contributed by 187-192 (GAGETI).

It belongs to the glutamyl-tRNA reductase family. Homodimer.

It catalyses the reaction (S)-4-amino-5-oxopentanoate + tRNA(Glu) + NADP(+) = L-glutamyl-tRNA(Glu) + NADPH + H(+). The protein operates within porphyrin-containing compound metabolism; protoporphyrin-IX biosynthesis; 5-aminolevulinate from L-glutamyl-tRNA(Glu): step 1/2. Its function is as follows. Catalyzes the NADPH-dependent reduction of glutamyl-tRNA(Glu) to glutamate 1-semialdehyde (GSA). This Pseudomonas paraeruginosa (strain DSM 24068 / PA7) (Pseudomonas aeruginosa (strain PA7)) protein is Glutamyl-tRNA reductase.